We begin with the raw amino-acid sequence, 342 residues long: Prenyl transferase penC (342 aa).

A helical membrane pass occupies residues 17 to 37 (LSYLTLTVGALALVVVLYISI). An isopentenyl diphosphate-binding site is contributed by His-110. Mg(2+) contacts are provided by Asp-117 and Asp-121. Dimethylallyl diphosphate is bound at residue Arg-126. Asn-154 carries an N-linked (GlcNAc...) asparagine glycan. Residue Lys-210 participates in dimethylallyl diphosphate binding.

The protein belongs to the FPP/GGPP synthase family.

It is found in the membrane. It functions in the pathway secondary metabolite biosynthesis. Prenyl transferase; part of the gene cluster that mediates the biosynthesis of the indole diterpenes penitrems. The geranylgeranyl diphosphate (GGPP) synthase penG catalyzes the first step in penitrem biosynthesis via conversion of farnesyl pyrophosphate and isopentyl pyrophosphate into geranylgeranyl pyrophosphate (GGPP). Condensation of indole-3-glycerol phosphate with GGPP by the prenyl transferase penC then forms 3-geranylgeranylindole (3-GGI). Epoxidation by the FAD-dependent monooxygenase penM leads to a epoxidized-GGI that is substrate of the terpene cyclase penB for cyclization to yield paspaline. Paspaline is subsequently converted to 13-desoxypaxilline by the cytochrome P450 monooxygenase penP, the latter being then converted to paxilline by the cytochrome P450 monooxygenase penQ. Paxilline is converted to beta-paxitriol via C-10 ketoreduction by the short-chain dehydrogenase PC-15 which can be monoprenylated at the C-20 by the indole diterpene prenyltransferase penD. A two-step elimination (acetylation and elimination) process performed by the O-acetyltransferase PC-16 and the P.simplicissimum ptmI-ortholog not yet identified in P.crustosum, leads to the production of the prenylated form of penijanthine. The FAD-linked oxidoreductase ptmO then converts the prenylated form of penijanthine into PC-M5 which is in turn transformed into PC-M4 by the aromatic dimethylallyltransferase PC-22. A series of oxidation steps involving 4 cytochrome P450 monooxygenases (PC-21, PC-05, PC-23, PC-20) and a FAD-dependent monooxygenase (PC-14) are required for the transformation of PC-M4 to penitrems A and E. Synthesis of these final products is proposed to proceed via penitrems D and C (PC-21, PC-05, PC-14) and penitrems B and F (PC-21, PC-05, PC-14, PC-23). The chain is Prenyl transferase penC from Penicillium crustosum (Blue mold fungus).